A 298-amino-acid polypeptide reads, in one-letter code: Osmoprotective compounds uptake permease protein GgtD (298 aa).

7 helical membrane passes run 26–46 (IHIA…GLFI), 97–117 (IAVP…YAFA), 126–146 (LLFI…LIPV), 158–178 (TFLG…IYLL), 207–227 (LIVP…FLWV), 231–251 (LLVA…TIQL), and 263–283 (YLLT…FFGL). In terms of domain architecture, ABC transmembrane type-1 spans 91–283 (FLNSLTIAVP…IVPLMVFFGL (193 aa)).

Belongs to the binding-protein-dependent transport system permease family. As to quaternary structure, the complex is composed of two ATP-binding proteins (GgtA), two transmembrane proteins (GgtC and GgtD) and a solute-binding protein (GgtB).

It localises to the cell membrane. In terms of biological role, part of the ABC transporter complex GgtABCD involved in the uptake of the osmoprotective compounds glucosylglycerol (GG), sucrose and trehalose. Responsible for the translocation of the substrate across the membrane. In Synechocystis sp. (strain ATCC 27184 / PCC 6803 / Kazusa), this protein is Osmoprotective compounds uptake permease protein GgtD.